The following is a 77-amino-acid chain: U8-lycotoxin-Ls1b (77 aa).

Residues 1–20 (MKLIIFTGLVLFAIVSLIEA) form the signal peptide. A propeptide spanning residues 21–26 (QAENEK) is cleaved from the precursor.

This sequence belongs to the neurotoxin 19 (CSTX) family. 08 (U8-Lctx) subfamily. In terms of processing, contains 4 disulfide bonds. Expressed by the venom gland.

It is found in the secreted. The chain is U8-lycotoxin-Ls1b from Lycosa singoriensis (Wolf spider).